A 408-amino-acid polypeptide reads, in one-letter code: Elongation factor Tu (408 aa).

One can recognise a tr-type G domain in the interval 10–219 (KTHVNVGTIG…ALDTYIPDPV (210 aa)). Residues 19–26 (GHVDHGKT), 88–92 (DCPGH), and 143–146 (NKCD) each bind GTP. Residue T26 participates in Mg(2+) binding.

Belongs to the TRAFAC class translation factor GTPase superfamily. Classic translation factor GTPase family. EF-Tu/EF-1A subfamily. As to quaternary structure, monomer.

The protein resides in the cytoplasm. The enzyme catalyses GTP + H2O = GDP + phosphate + H(+). GTP hydrolase that promotes the GTP-dependent binding of aminoacyl-tRNA to the A-site of ribosomes during protein biosynthesis. The sequence is that of Elongation factor Tu from Brachyspira hyodysenteriae (strain ATCC 49526 / WA1).